The chain runs to 507 residues: Wax ester synthase/diacylglycerol acyltransferase 5 (507 aa).

Over 1-211 (MEIKIRRRRG…LKTSSRCYSR (211 aa)) the chain is Cytoplasmic. H161 acts as the Proton acceptor in catalysis. Residues 212–232 (FFWLVMVLWSAALLVLNTVCD) traverse the membrane as a helical segment. Residues 233–507 (ALEFIATALF…VVVQERTSTQ (275 aa)) are Lumenal-facing. N-linked (GlcNAc...) asparagine glycosylation is found at N314 and N421.

This sequence in the N-terminal section; belongs to the long-chain O-acyltransferase family. In terms of tissue distribution, mostly expressed in flowers and siliques.

The protein resides in the cell membrane. Its subcellular location is the endoplasmic reticulum membrane. It carries out the reaction a long chain fatty alcohol + a fatty acyl-CoA = a wax ester + CoA. The enzyme catalyses an acyl-CoA + a 1,2-diacyl-sn-glycerol = a triacyl-sn-glycerol + CoA. It functions in the pathway glycerolipid metabolism; triacylglycerol biosynthesis. It participates in lipid metabolism. Functionally, bifunctional wax ester synthase/diacylglycerol acyltransferase. Involved in cuticular wax biosynthesis. This Arabidopsis thaliana (Mouse-ear cress) protein is Wax ester synthase/diacylglycerol acyltransferase 5.